We begin with the raw amino-acid sequence, 331 residues long: Holliday junction branch migration complex subunit RuvB (331 aa).

The tract at residues 4–182 is large ATPase domain (RuvB-L); the sequence is KDILQSSECI…FGIPMHLEFY (179 aa). ATP-binding positions include arginine 22, glycine 63, lysine 66, threonine 67, threonine 68, 129 to 131, arginine 172, tyrosine 182, and arginine 219; that span reads EDF. Mg(2+) is bound at residue threonine 67. A small ATPAse domain (RuvB-S) region spans residues 183 to 253; it reads STEELTKVIK…FADQALLRLG (71 aa). Positions 256 to 331 are head domain (RuvB-H); it reads KLGLDRQDIK…SYLNEQTYNM (76 aa). Positions 309 and 314 each coordinate DNA.

It belongs to the RuvB family. Homohexamer. Forms an RuvA(8)-RuvB(12)-Holliday junction (HJ) complex. HJ DNA is sandwiched between 2 RuvA tetramers; dsDNA enters through RuvA and exits via RuvB. An RuvB hexamer assembles on each DNA strand where it exits the tetramer. Each RuvB hexamer is contacted by two RuvA subunits (via domain III) on 2 adjacent RuvB subunits; this complex drives branch migration. In the full resolvosome a probable DNA-RuvA(4)-RuvB(12)-RuvC(2) complex forms which resolves the HJ.

It localises to the cytoplasm. It catalyses the reaction ATP + H2O = ADP + phosphate + H(+). Its function is as follows. The RuvA-RuvB-RuvC complex processes Holliday junction (HJ) DNA during genetic recombination and DNA repair, while the RuvA-RuvB complex plays an important role in the rescue of blocked DNA replication forks via replication fork reversal (RFR). RuvA specifically binds to HJ cruciform DNA, conferring on it an open structure. The RuvB hexamer acts as an ATP-dependent pump, pulling dsDNA into and through the RuvAB complex. RuvB forms 2 homohexamers on either side of HJ DNA bound by 1 or 2 RuvA tetramers; 4 subunits per hexamer contact DNA at a time. Coordinated motions by a converter formed by DNA-disengaged RuvB subunits stimulates ATP hydrolysis and nucleotide exchange. Immobilization of the converter enables RuvB to convert the ATP-contained energy into a lever motion, pulling 2 nucleotides of DNA out of the RuvA tetramer per ATP hydrolyzed, thus driving DNA branch migration. The RuvB motors rotate together with the DNA substrate, which together with the progressing nucleotide cycle form the mechanistic basis for DNA recombination by continuous HJ branch migration. Branch migration allows RuvC to scan DNA until it finds its consensus sequence, where it cleaves and resolves cruciform DNA. This is Holliday junction branch migration complex subunit RuvB from Ehrlichia ruminantium (strain Gardel).